The chain runs to 250 residues: 3-deoxy-manno-octulosonate cytidylyltransferase (250 aa).

The protein belongs to the KdsB family.

It is found in the cytoplasm. It carries out the reaction 3-deoxy-alpha-D-manno-oct-2-ulosonate + CTP = CMP-3-deoxy-beta-D-manno-octulosonate + diphosphate. The protein operates within nucleotide-sugar biosynthesis; CMP-3-deoxy-D-manno-octulosonate biosynthesis; CMP-3-deoxy-D-manno-octulosonate from 3-deoxy-D-manno-octulosonate and CTP: step 1/1. It functions in the pathway bacterial outer membrane biogenesis; lipopolysaccharide biosynthesis. Its function is as follows. Activates KDO (a required 8-carbon sugar) for incorporation into bacterial lipopolysaccharide in Gram-negative bacteria. In Thioalkalivibrio sulfidiphilus (strain HL-EbGR7), this protein is 3-deoxy-manno-octulosonate cytidylyltransferase.